Here is a 591-residue protein sequence, read N- to C-terminus: Probable methyltransferase PMT6 (591 aa).

The Cytoplasmic portion of the chain corresponds to Met1–Gln13. Residues Thr14–Thr34 traverse the membrane as a helical; Signal-anchor for type II membrane protein segment. Topologically, residues Asn35–Ile591 are lumenal. N-linked (GlcNAc...) asparagine glycosylation is found at Asn87, Asn99, Asn146, Asn193, Asn323, Asn436, Asn473, and Asn515.

This sequence belongs to the methyltransferase superfamily.

It localises to the endoplasmic reticulum membrane. This chain is Probable methyltransferase PMT6, found in Arabidopsis thaliana (Mouse-ear cress).